Reading from the N-terminus, the 1165-residue chain is ATP-dependent helicase/deoxyribonuclease subunit B (1165 aa).

The UvrD-like helicase ATP-binding domain occupies 1-324 (MRFIIGGAGS…LVEAQNRREE (324 aa)). 6–13 (GGAGSGKS) provides a ligand contact to ATP. Residues 282–597 (PLRFRGAPEL…IVGTVERSRH (316 aa)) form the UvrD-like helicase C-terminal domain. Cysteine 803, cysteine 1121, cysteine 1124, and cysteine 1130 together coordinate [4Fe-4S] cluster.

This sequence belongs to the helicase family. AddB/RexB type 1 subfamily. In terms of assembly, heterodimer of AddA and AddB. It depends on Mg(2+) as a cofactor. The cofactor is [4Fe-4S] cluster.

Functionally, the heterodimer acts as both an ATP-dependent DNA helicase and an ATP-dependent, dual-direction single-stranded exonuclease. Recognizes the chi site generating a DNA molecule suitable for the initiation of homologous recombination. The AddB subunit has 5' -&gt; 3' nuclease activity but not helicase activity. The protein is ATP-dependent helicase/deoxyribonuclease subunit B of Symbiobacterium thermophilum (strain DSM 24528 / JCM 14929 / IAM 14863 / T).